We begin with the raw amino-acid sequence, 151 residues long: Small ribosomal subunit protein uS15 (151 aa).

Ser-21 and Ser-32 each carry phosphoserine.

This sequence belongs to the universal ribosomal protein uS15 family. In terms of assembly, component of the small ribosomal subunit (SSU). Mature yeast ribosomes consist of a small (40S) and a large (60S) subunit. The 40S small subunit contains 1 molecule of ribosomal RNA (18S rRNA) and at least 33 different proteins. The large 60S subunit contains 3 rRNA molecules (25S, 5.8S and 5S rRNA) and at least 46 different proteins.

Its subcellular location is the cytoplasm. Component of the ribosome, a large ribonucleoprotein complex responsible for the synthesis of proteins in the cell. The small ribosomal subunit (SSU) binds messenger RNAs (mRNAs) and translates the encoded message by selecting cognate aminoacyl-transfer RNA (tRNA) molecules. The large subunit (LSU) contains the ribosomal catalytic site termed the peptidyl transferase center (PTC), which catalyzes the formation of peptide bonds, thereby polymerizing the amino acids delivered by tRNAs into a polypeptide chain. The nascent polypeptides leave the ribosome through a tunnel in the LSU and interact with protein factors that function in enzymatic processing, targeting, and the membrane insertion of nascent chains at the exit of the ribosomal tunnel. The chain is Small ribosomal subunit protein uS15 (rps13) from Schizosaccharomyces pombe (strain 972 / ATCC 24843) (Fission yeast).